Consider the following 350-residue polypeptide: Protein RecA (350 aa).

80–87 is a binding site for ATP; sequence GPESSGKT.

The protein belongs to the RecA family.

Its subcellular location is the cytoplasm. Its function is as follows. Can catalyze the hydrolysis of ATP in the presence of single-stranded DNA, the ATP-dependent uptake of single-stranded DNA by duplex DNA, and the ATP-dependent hybridization of homologous single-stranded DNAs. It interacts with LexA causing its activation and leading to its autocatalytic cleavage. The chain is Protein RecA from Chlorobium limicola (strain DSM 245 / NBRC 103803 / 6330).